We begin with the raw amino-acid sequence, 505 residues long: Serine/threonine-protein kinase D (505 aa).

A Protein kinase domain is found at 9–271 (YEIVKSLGSG…AMYQALHSLI (263 aa)). ATP-binding positions include 15 to 23 (LGSGGFGDT) and K40. The Proton acceptor role is filled by D136. The SH3b domain occupies 436–505 (GASATIGGIP…GWIASQLVNF (70 aa)).

The protein belongs to the protein kinase superfamily. Ser/Thr protein kinase family.

The enzyme catalyses L-seryl-[protein] + ATP = O-phospho-L-seryl-[protein] + ADP + H(+). The catalysed reaction is L-threonyl-[protein] + ATP = O-phospho-L-threonyl-[protein] + ADP + H(+). This Synechocystis sp. (strain ATCC 27184 / PCC 6803 / Kazusa) protein is Serine/threonine-protein kinase D (spkD).